A 1588-amino-acid polypeptide reads, in one-letter code: Pentafunctional AROM polypeptide (1588 aa).

The 3-dehydroquinate synthase stretch occupies residues 1–392 (MVQLAKVPIL…YGDSAQFVSD (392 aa)). Residues 43 to 45 (DTN), 78 to 81 (ETSK), 109 to 111 (GGV), and D114 contribute to the NAD(+) site. 7-phospho-2-dehydro-3-deoxy-D-arabino-heptonate is bound at residue R125. Position 134 to 135 (134 to 135 (TS)) interacts with NAD(+). 7-phospho-2-dehydro-3-deoxy-D-arabino-heptonate-binding residues include D141 and K147. NAD(+) is bound at residue K156. Residue N157 participates in 7-phospho-2-dehydro-3-deoxy-D-arabino-heptonate binding. Residues 174–177 (WLET) and N185 each bind NAD(+). Zn(2+) is bound at residue E189. 7-phospho-2-dehydro-3-deoxy-D-arabino-heptonate is bound by residues 189–192 (EVIK) and K258. E268 serves as the catalytic Proton acceptor; for 3-dehydroquinate synthase activity. 7-phospho-2-dehydro-3-deoxy-D-arabino-heptonate contacts are provided by residues 272–276 (RNLLN) and H279. Residue H279 participates in Zn(2+) binding. Residue H283 is the Proton acceptor; for 3-dehydroquinate synthase activity of the active site. H295 and K364 together coordinate 7-phospho-2-dehydro-3-deoxy-D-arabino-heptonate. H295 contacts Zn(2+). Positions 405-871 (VYPFKDIPAD…WDVLHSELGA (467 aa)) are EPSP synthase. C853 (for EPSP synthase activity) is an active-site residue. Positions 890-1080 (SVVIIGMRAA…IPSGRSAFVC (191 aa)) are shikimate kinase. Residue 895-902 (GMRAAGKT) coordinates ATP. The segment at 1081–1293 (LTFDDLTEQT…AAPGQLTVAQ (213 aa)) is 3-dehydroquinase. Residue H1198 is the Proton acceptor; for 3-dehydroquinate dehydratase activity of the active site. K1227 acts as the Schiff-base intermediate with substrate; for 3-dehydroquinate dehydratase activity in catalysis. Residues 1306–1588 (PKELFVVGKP…KAIFDAVTKE (283 aa)) form a shikimate dehydrogenase region.

This sequence in the N-terminal section; belongs to the sugar phosphate cyclases superfamily. Dehydroquinate synthase family. It in the 2nd section; belongs to the EPSP synthase family. In the 3rd section; belongs to the shikimate kinase family. The protein in the 4th section; belongs to the type-I 3-dehydroquinase family. This sequence in the C-terminal section; belongs to the shikimate dehydrogenase family. Homodimer. Requires Zn(2+) as cofactor.

The protein resides in the cytoplasm. It catalyses the reaction 7-phospho-2-dehydro-3-deoxy-D-arabino-heptonate = 3-dehydroquinate + phosphate. It carries out the reaction 3-dehydroquinate = 3-dehydroshikimate + H2O. The enzyme catalyses shikimate + NADP(+) = 3-dehydroshikimate + NADPH + H(+). The catalysed reaction is shikimate + ATP = 3-phosphoshikimate + ADP + H(+). It catalyses the reaction 3-phosphoshikimate + phosphoenolpyruvate = 5-O-(1-carboxyvinyl)-3-phosphoshikimate + phosphate. It functions in the pathway metabolic intermediate biosynthesis; chorismate biosynthesis; chorismate from D-erythrose 4-phosphate and phosphoenolpyruvate: step 2/7. Its pathway is metabolic intermediate biosynthesis; chorismate biosynthesis; chorismate from D-erythrose 4-phosphate and phosphoenolpyruvate: step 3/7. It participates in metabolic intermediate biosynthesis; chorismate biosynthesis; chorismate from D-erythrose 4-phosphate and phosphoenolpyruvate: step 4/7. The protein operates within metabolic intermediate biosynthesis; chorismate biosynthesis; chorismate from D-erythrose 4-phosphate and phosphoenolpyruvate: step 5/7. It functions in the pathway metabolic intermediate biosynthesis; chorismate biosynthesis; chorismate from D-erythrose 4-phosphate and phosphoenolpyruvate: step 6/7. The AROM polypeptide catalyzes 5 consecutive enzymatic reactions in prechorismate polyaromatic amino acid biosynthesis. The protein is Pentafunctional AROM polypeptide of Saccharomyces cerevisiae (strain RM11-1a) (Baker's yeast).